The sequence spans 172 residues: Signal peptidase complex catalytic subunit SEC11 (172 aa).

At 1 to 14 the chain is on the cytoplasmic side; it reads MLSSLANPRQAASQ. The helical; Signal-anchor for type II membrane protein transmembrane segment at 15–35 threads the bilayer; it reads LLNFALILSTAFMMWKGLSVV. The Lumenal segment spans residues 36–172; the sequence is SDSPSPIVVV…MGLVVVLQRE (137 aa). Residues Ser49, His90, and Asp115 each act as charge relay system in the active site. Residues 158 to 169 form a C-terminal short (CTS) helix region; sequence AMLGIMGLVVVL.

Belongs to the peptidase S26B family. Component of the signal peptidase complex (SPC) composed of a catalytic subunit SEC11 and three accessory subunits SPC1, SPC2 and SPC3. The complex induces a local thinning of the ER membrane which is used to measure the length of the signal peptide (SP) h-region of protein substrates. This ensures the selectivity of the complex towards h-regions shorter than 18-20 amino acids. SPC associates with the translocon complex.

The protein localises to the endoplasmic reticulum membrane. It carries out the reaction Cleavage of hydrophobic, N-terminal signal or leader sequences from secreted and periplasmic proteins.. Functionally, catalytic component of the signal peptidase complex (SPC) which catalyzes the cleavage of N-terminal signal sequences from nascent proteins as they are translocated into the lumen of the endoplasmic reticulum. Specifically cleaves N-terminal signal peptides that contain a hydrophobic alpha-helix (h-region) shorter than 18-20 amino acids. This is Signal peptidase complex catalytic subunit SEC11 (SEC11) from Colletotrichum graminicola (strain M1.001 / M2 / FGSC 10212) (Maize anthracnose fungus).